We begin with the raw amino-acid sequence, 517 residues long: MWVMQGERRRARAPWGPPDTGGALLERWISRERRSDSRDASGSAKQRSAMGNSLPVESKFTDEKENDRIKYVVSSMQGWGEKMEDAHAAILNLDDTMTSFFGVYDGHGGAEVASYCAKRFHIELCNHEDYDSNLSNAMRSAFYSMDEDLQLSDAWRELVIPRNNGWMYFIKAGVCANLSPFPQATYTAPSYEGSTACVVVIRGDQLIVGHAGDSRCVLSRNGQASALSVDHKPDSESERERVQNAGGVAVGYSYRKIMGRWVTKKQWGFTDFKGRVSISRSIGDFACKKNERLPPEDQMLTCNPDILTMDITDDMEFLVIATEGLWCNMTNQNVVDHTHDRLLEGAEARVICEELVQFGLPSGDNTTVILVLFKPGAFPAVPPVDTDTDTDSHIDDDVDPTGSNNATASDNNDPANEVDPTANAGSDDSNTGDEVKVDATATAVGSSSTTAVAADEGTGNPPHGALVDTDDEDGLTYSQDMDLPPASTSPPTFPDEDDLPRSNPDKSPPHDDTYHRW.

The segment at 1 to 59 (MWVMQGERRRARAPWGPPDTGGALLERWISRERRSDSRDASGSAKQRSAMGNSLPVESK) is disordered. Over residues 28–39 (WISRERRSDSRD) the composition is skewed to basic and acidic residues. Residues 70–373 (KYVVSSMQGW…DNTTVILVLF (304 aa)) enclose the PPM-type phosphatase domain. Residues aspartate 105, glycine 106, glutamate 323, and aspartate 364 each coordinate Mn(2+). Positions 380–517 (AVPPVDTDTD…PPHDDTYHRW (138 aa)) are disordered. Residues 402-414 (GSNNATASDNNDP) show a composition bias toward polar residues. Positions 438-455 (DATATAVGSSSTTAVAAD) are enriched in low complexity. Residues 499 to 517 (LPRSNPDKSPPHDDTYHRW) are compositionally biased toward basic and acidic residues.

This sequence belongs to the PP2C family. It depends on Mg(2+) as a cofactor. The cofactor is Mn(2+).

The enzyme catalyses O-phospho-L-seryl-[protein] + H2O = L-seryl-[protein] + phosphate. The catalysed reaction is O-phospho-L-threonyl-[protein] + H2O = L-threonyl-[protein] + phosphate. This chain is Probable protein phosphatase 2C 20, found in Oryza sativa subsp. japonica (Rice).